A 753-amino-acid polypeptide reads, in one-letter code: 5-methyltetrahydropteroyltriglutamate--homocysteine methyltransferase (753 aa).

Residues R19–K22 and R113 contribute to the 5-methyltetrahydropteroyltri-L-glutamate site. L-homocysteine-binding positions include I430–S432 and E483. L-methionine-binding positions include I430–S432 and E483. Residues R514–C515 and W560 contribute to the 5-methyltetrahydropteroyltri-L-glutamate site. Position 598 (D598) interacts with L-homocysteine. Position 598 (D598) interacts with L-methionine. E604 contacts 5-methyltetrahydropteroyltri-L-glutamate. Zn(2+) contacts are provided by H640, C642, and E664. The active-site Proton donor is H693. C725 is a binding site for Zn(2+).

This sequence belongs to the vitamin-B12 independent methionine synthase family. Zn(2+) is required as a cofactor.

The enzyme catalyses 5-methyltetrahydropteroyltri-L-glutamate + L-homocysteine = tetrahydropteroyltri-L-glutamate + L-methionine. Its pathway is amino-acid biosynthesis; L-methionine biosynthesis via de novo pathway; L-methionine from L-homocysteine (MetE route): step 1/1. Catalyzes the transfer of a methyl group from 5-methyltetrahydrofolate to homocysteine resulting in methionine formation. The polypeptide is 5-methyltetrahydropteroyltriglutamate--homocysteine methyltransferase (Rhodococcus jostii (strain RHA1)).